Consider the following 149-residue polypeptide: Large ribosomal subunit protein bL9 (149 aa).

The protein belongs to the bacterial ribosomal protein bL9 family.

In terms of biological role, binds to the 23S rRNA. The polypeptide is Large ribosomal subunit protein bL9 (Aquifex aeolicus (strain VF5)).